Reading from the N-terminus, the 309-residue chain is Protoheme IX farnesyltransferase (309 aa).

The next 9 membrane-spanning stretches (helical) occupy residues 35–55, 64–84, 114–134, 135–155, 161–181, 187–207, 236–256, 257–277, and 289–309; these read IGIV…ALYF, LHIV…SCSI, VLWL…MTTV, TAAI…TMWS, LNTV…WTAV, VVPL…FLAL, IVVW…LGVP, FLTV…YGFK, and FIYS…ATLW.

This sequence belongs to the UbiA prenyltransferase family. Protoheme IX farnesyltransferase subfamily. In terms of assembly, interacts with CtaA.

The protein localises to the cell membrane. It carries out the reaction heme b + (2E,6E)-farnesyl diphosphate + H2O = Fe(II)-heme o + diphosphate. It functions in the pathway porphyrin-containing compound metabolism; heme O biosynthesis; heme O from protoheme: step 1/1. Its function is as follows. Converts heme B (protoheme IX) to heme O by substitution of the vinyl group on carbon 2 of heme B porphyrin ring with a hydroxyethyl farnesyl side group. This Geobacillus sp. (strain WCH70) protein is Protoheme IX farnesyltransferase.